A 102-amino-acid polypeptide reads, in one-letter code: Acid shock protein (102 aa).

The N-terminal stretch at Met1 to Ala21 is a signal peptide. The segment covering Ala21 to Lys41 has biased composition (low complexity). Positions Ala21–Ala102 are disordered. Positions Ala22–Gln58 are excised as a propeptide. Residues Ala80–His90 show a composition bias toward basic residues. The segment covering Gln91–Ala102 has biased composition (low complexity).

Belongs to the Asr family. Proteolytic processing gives rise to the active protein.

The protein localises to the periplasm. Its function is as follows. Required for growth and/or survival at acidic conditions. This chain is Acid shock protein, found in Escherichia coli (strain K12 / MC4100 / BW2952).